A 329-amino-acid chain; its full sequence is Protein Brevis radix-like 4 (329 aa).

The tract at residues 12–37 (SGTSRHHGQQRRGGSPPPRGRTTSVY) is disordered. In terms of domain architecture, BRX 1 spans 86-142 (REWVAQVEPGVQITFVSLAGGGGNDLKRIRFSREMYDKWQAQKWWGENNERIMELYN). Residues 151-263 (LPTPPRSDDG…TTSCSSRDEV (113 aa)) form a disordered region. Low complexity-rich tracts occupy residues 222-236 (SNPSERAWQQQQQPQ) and 243-252 (AAASDAMDAA). Residues 253–263 (RTTSCSSRDEV) are compositionally biased toward polar residues. The BRX 2 domain maps to 274 to 329 (TEWVIQDEPGVYITVRELADGTRELRRVRFSRERFAELNAKLWWEENKERIQAQYL).

The protein belongs to the BRX family.

The protein resides in the nucleus. In Oryza sativa subsp. japonica (Rice), this protein is Protein Brevis radix-like 4 (BRXL4).